The following is a 431-amino-acid chain: Nuclear envelope integral membrane protein 1 (431 aa).

The first 29 residues, 1–29 (MAGEVEGEGCRVSWGVLVALLLLPLPSLC), serve as a signal peptide directing secretion. A run of 5 helical transmembrane segments spans residues 151–171 (PRLF…DTLS), 175–195 (IFYY…ILVF), 206–226 (PFVA…QLVF), 236–256 (YWQY…AFCY), and 266–286 (SINI…YISV). The a; required for its colocalization with lamins at the nuclear envelope stretch occupies residues 176-287 (FYYSTGITVG…GLLLMYISVQ (112 aa)). The Nuclear localization signal signature appears at 317 to 325 (RKIKLKRGK). The segment at 326–395 (PSPPRLLTEE…LTPNEVSVHE (70 aa)) is b; required for interaction with ran. Residues 326–431 (PSPPRLLTEE…IEPVLYQDLR (106 aa)) are interaction with banf1-a and banf1-b. The tract at residues 368 to 375 (SRIQSPKR) is BAF-binding site (BBS); essential for interaction with banf1-a, banf1-b and ran.

This sequence belongs to the NEMP family. As to quaternary structure, homooligomer. Interacts with banf1-a and banf1-b. Interacts with ran-gtp. In terms of processing, phosphorylated.

It localises to the nucleus inner membrane. The protein resides in the nucleus envelope. In concert with ran, required for proper eye development. May be involved in the expression of early eye marker genes. Contributes to nuclear envelope stiffness in germ cells. Required for fertility. Essential for normal erythropoiesis. Required for efficient nuclear envelope opening and enucleation during the late stages of erythroblast maturation. The protein is Nuclear envelope integral membrane protein 1 (nemp1) of Xenopus tropicalis (Western clawed frog).